Reading from the N-terminus, the 179-residue chain is Large ribosomal subunit protein uL6 (179 aa).

This sequence belongs to the universal ribosomal protein uL6 family. Part of the 50S ribosomal subunit.

Functionally, this protein binds to the 23S rRNA, and is important in its secondary structure. It is located near the subunit interface in the base of the L7/L12 stalk, and near the tRNA binding site of the peptidyltransferase center. This Saccharopolyspora erythraea (strain ATCC 11635 / DSM 40517 / JCM 4748 / NBRC 13426 / NCIMB 8594 / NRRL 2338) protein is Large ribosomal subunit protein uL6.